A 304-amino-acid polypeptide reads, in one-letter code: Non-specific ribonucleoside hydrolase RihC (304 aa).

Residue H235 is part of the active site.

This sequence belongs to the IUNH family. RihC subfamily.

Functionally, hydrolyzes both purine and pyrimidine ribonucleosides with a broad-substrate specificity. The chain is Non-specific ribonucleoside hydrolase RihC from Salmonella paratyphi A (strain ATCC 9150 / SARB42).